Consider the following 227-residue polypeptide: Mediator of RNA polymerase II transcription subunit 6 (227 aa).

The span at 149-162 (PSQGYTYEDSQLTT) shows a compositional bias: polar residues. 2 disordered regions span residues 149–172 (PSQG…TPQA) and 204–227 (QSES…PLKK).

This sequence belongs to the Mediator complex subunit 6 family. As to quaternary structure, component of the Mediator complex.

Its subcellular location is the nucleus. Its function is as follows. Component of the Mediator complex, a coactivator involved in the regulated transcription of nearly all RNA polymerase II-dependent genes. Mediator functions as a bridge to convey information from gene-specific regulatory proteins to the basal RNA polymerase II transcription machinery. Mediator is recruited to promoters by direct interactions with regulatory proteins and serves as a scaffold for the assembly of a functional preinitiation complex with RNA polymerase II and the general transcription factors. In Yarrowia lipolytica (strain CLIB 122 / E 150) (Yeast), this protein is Mediator of RNA polymerase II transcription subunit 6 (MED6).